We begin with the raw amino-acid sequence, 94 residues long: Putative pterin-4-alpha-carbinolamine dehydratase (94 aa).

This sequence belongs to the pterin-4-alpha-carbinolamine dehydratase family.

It catalyses the reaction (4aS,6R)-4a-hydroxy-L-erythro-5,6,7,8-tetrahydrobiopterin = (6R)-L-erythro-6,7-dihydrobiopterin + H2O. In Koribacter versatilis (strain Ellin345), this protein is Putative pterin-4-alpha-carbinolamine dehydratase.